The following is a 341-amino-acid chain: Retinol dehydrogenase 10 (341 aa).

Residues 3 to 23 traverse the membrane as a helical; Signal-anchor segment; it reads IVLEFFLVTFKVLWAFVLAAA. 40-64 contacts NADP(+); the sequence is LITGAGSGLGRLFALEFARRRAQLV. Serine 197 serves as a coordination point for substrate. The Proton acceptor role is filled by tyrosine 210.

Belongs to the short-chain dehydrogenases/reductases (SDR) family.

Its subcellular location is the microsome membrane. The protein localises to the endoplasmic reticulum membrane. It catalyses the reaction all-trans-retinol + NADP(+) = all-trans-retinal + NADPH + H(+). It functions in the pathway cofactor metabolism; retinol metabolism. Functionally, retinol dehydrogenase with a clear preference for NADP. Converts all-trans-retinol to all-trans-retinal. Has no detectable activity towards 11-cis-retinol, 9-cis-retinol and 13-cis-retinol. The sequence is that of Retinol dehydrogenase 10 (rdh10) from Xenopus tropicalis (Western clawed frog).